The primary structure comprises 727 residues: DNA replication licensing factor MCM5 (727 aa).

Residues 325–531 (VYKNICTKIA…SQDKEIASHI (207 aa)) enclose the MCM domain. 375–382 (GDPSTAKS) is a binding site for ATP. Positions 507–510 (SRFD) match the Arginine finger motif.

It belongs to the MCM family. In terms of assembly, component of the minichromosome maintenance (MCM) complex, a heterotetramer composed of MCM2, MCM3, MCM4, MCM5, MCM6 and MCM7. Interacts with EGT1. Expressed in shoot apex and flower buds.

Its subcellular location is the nucleus. The protein localises to the cytoplasm. It carries out the reaction ATP + H2O = ADP + phosphate + H(+). In terms of biological role, probable component of the MCM2-7 complex (MCM complex) that may function as a DNA helicase and which is essential to undergo a single round of replication initiation and elongation per cell cycle in eukaryotic cells. The polypeptide is DNA replication licensing factor MCM5 (MCM5) (Arabidopsis thaliana (Mouse-ear cress)).